The chain runs to 301 residues: Acetylglutamate kinase (301 aa).

Substrate contacts are provided by residues 68–69 (GG), R90, and N195.

Belongs to the acetylglutamate kinase family. ArgB subfamily.

It localises to the cytoplasm. It catalyses the reaction N-acetyl-L-glutamate + ATP = N-acetyl-L-glutamyl 5-phosphate + ADP. The protein operates within amino-acid biosynthesis; L-arginine biosynthesis; N(2)-acetyl-L-ornithine from L-glutamate: step 2/4. Its function is as follows. Catalyzes the ATP-dependent phosphorylation of N-acetyl-L-glutamate. The chain is Acetylglutamate kinase from Pseudomonas putida (strain GB-1).